Reading from the N-terminus, the 283-residue chain is MTATIIDGKETAKEKREQLAKEVEELKQKGVTPGLAVILIGDDPASLSYVRGKKKAAEAMGMHFQLDHLDASLTEEELLQLIDQYNANDQFHGILVQLPLPKHISEKAVIERISPEKDVDGFHPLNIGKMLLGEDTFLPCTPAGIVELLNKTGVNLSGKEVVVVGRSNIVGKPVGQLLLNENATVTYCHSRTANISEHTLKADILVVAVGRANFIKADQIKEGAIVIDVGVNRLDTGKLVGDVDFEEAKEKASYITPVPGGVGPMTITMLAHNTVKSAKRTLA.

Residues 165-167, serine 190, and valine 231 each bind NADP(+); that span reads GRS.

The protein belongs to the tetrahydrofolate dehydrogenase/cyclohydrolase family. In terms of assembly, homodimer.

It carries out the reaction (6R)-5,10-methylene-5,6,7,8-tetrahydrofolate + NADP(+) = (6R)-5,10-methenyltetrahydrofolate + NADPH. The catalysed reaction is (6R)-5,10-methenyltetrahydrofolate + H2O = (6R)-10-formyltetrahydrofolate + H(+). It functions in the pathway one-carbon metabolism; tetrahydrofolate interconversion. Functionally, catalyzes the oxidation of 5,10-methylenetetrahydrofolate to 5,10-methenyltetrahydrofolate and then the hydrolysis of 5,10-methenyltetrahydrofolate to 10-formyltetrahydrofolate. In Bacillus pumilus (strain SAFR-032), this protein is Bifunctional protein FolD.